The primary structure comprises 227 residues: Cytochrome c oxidase subunit 2 (227 aa).

At 1–14 (MAYPFQLGLQDATS) the chain is on the mitochondrial intermembrane side. Residues 15 to 45 (PIMEELMNFHDHTLMIVFLISSLVLYIISLM) traverse the membrane as a helical segment. Topologically, residues 46–59 (LTTKLTHTSTMDAQ) are mitochondrial matrix. Residues 60–87 (EVETIWTILPAVILILIALPSLRILYMM) form a helical membrane-spanning segment. Residues 88 to 227 (DEINNPVLTV…NFENWSTSMI (140 aa)) are Mitochondrial intermembrane-facing. 6 residues coordinate Cu cation: H161, C196, E198, C200, H204, and M207. Residue E198 coordinates Mg(2+).

It belongs to the cytochrome c oxidase subunit 2 family. In terms of assembly, component of the cytochrome c oxidase (complex IV, CIV), a multisubunit enzyme composed of 14 subunits. The complex is composed of a catalytic core of 3 subunits MT-CO1, MT-CO2 and MT-CO3, encoded in the mitochondrial DNA, and 11 supernumerary subunits COX4I, COX5A, COX5B, COX6A, COX6B, COX6C, COX7A, COX7B, COX7C, COX8 and NDUFA4, which are encoded in the nuclear genome. The complex exists as a monomer or a dimer and forms supercomplexes (SCs) in the inner mitochondrial membrane with NADH-ubiquinone oxidoreductase (complex I, CI) and ubiquinol-cytochrome c oxidoreductase (cytochrome b-c1 complex, complex III, CIII), resulting in different assemblies (supercomplex SCI(1)III(2)IV(1) and megacomplex MCI(2)III(2)IV(2)). Found in a complex with TMEM177, COA6, COX18, COX20, SCO1 and SCO2. Interacts with TMEM177 in a COX20-dependent manner. Interacts with COX20. Interacts with COX16. Requires Cu cation as cofactor.

It localises to the mitochondrion inner membrane. The catalysed reaction is 4 Fe(II)-[cytochrome c] + O2 + 8 H(+)(in) = 4 Fe(III)-[cytochrome c] + 2 H2O + 4 H(+)(out). Its function is as follows. Component of the cytochrome c oxidase, the last enzyme in the mitochondrial electron transport chain which drives oxidative phosphorylation. The respiratory chain contains 3 multisubunit complexes succinate dehydrogenase (complex II, CII), ubiquinol-cytochrome c oxidoreductase (cytochrome b-c1 complex, complex III, CIII) and cytochrome c oxidase (complex IV, CIV), that cooperate to transfer electrons derived from NADH and succinate to molecular oxygen, creating an electrochemical gradient over the inner membrane that drives transmembrane transport and the ATP synthase. Cytochrome c oxidase is the component of the respiratory chain that catalyzes the reduction of oxygen to water. Electrons originating from reduced cytochrome c in the intermembrane space (IMS) are transferred via the dinuclear copper A center (CU(A)) of subunit 2 and heme A of subunit 1 to the active site in subunit 1, a binuclear center (BNC) formed by heme A3 and copper B (CU(B)). The BNC reduces molecular oxygen to 2 water molecules using 4 electrons from cytochrome c in the IMS and 4 protons from the mitochondrial matrix. The polypeptide is Cytochrome c oxidase subunit 2 (MT-CO2) (Apodemus mystacinus (Broad-toothed field mouse)).